We begin with the raw amino-acid sequence, 634 residues long: Chaperone protein HtpG (634 aa).

The segment at 1–344 (MSETVSHNKE…SNDLPLNVSR (344 aa)) is a; substrate-binding. The b stretch occupies residues 345-561 (EILQDNKVTQ…DFEMGTQMAK (217 aa)). Residues 562–634 (LLEAAGQAVP…GAINKLLTKV (73 aa)) are c.

The protein belongs to the heat shock protein 90 family. Homodimer.

Its subcellular location is the cytoplasm. Molecular chaperone. Has ATPase activity. This Vibrio campbellii (strain ATCC BAA-1116) protein is Chaperone protein HtpG.